A 493-amino-acid polypeptide reads, in one-letter code: Dihydro-heme d1 dehydrogenase (493 aa).

Positions 1–18 (MRLIGLALGLLLGALAQA) are cleaved as a signal peptide. In terms of domain architecture, Cytochrome c spans 19 to 96 (GEAPGEALYR…ALVAYLYQAP (78 aa)). Heme c contacts are provided by cysteine 31, cysteine 34, histidine 35, arginine 68, and methionine 73. The interval 114–468 (PHPLATLPSR…YDAHSLEEVK (355 aa)) is D1-heme domain. Residues histidine 165, glycine 167, lysine 169, arginine 182, arginine 207, asparagine 208, histidine 341, arginine 390, and histidine 435 each coordinate heme d1. Arginine 182 provides a ligand contact to heme c.

It belongs to the cytochrome c family. Monomer. Requires heme c as cofactor.

Its subcellular location is the periplasm. The catalysed reaction is dihydro-heme d1 + A = heme d1 + AH2. The protein operates within porphyrin-containing compound metabolism. In terms of biological role, involved in heme d1 biosynthesis. Catalyzes the introduction of a double bond into the propionate side chain of pyrrole ring D of dihydro-heme d1, therefore converting dihydro-heme d1 to heme d1. The polypeptide is Dihydro-heme d1 dehydrogenase (Pseudomonas aeruginosa (strain ATCC 15692 / DSM 22644 / CIP 104116 / JCM 14847 / LMG 12228 / 1C / PRS 101 / PAO1)).